The following is a 67-amino-acid chain: Large ribosomal subunit protein eL38 (67 aa).

It belongs to the eukaryotic ribosomal protein eL38 family.

This chain is Large ribosomal subunit protein eL38 (rpl38e), found in Aeropyrum pernix (strain ATCC 700893 / DSM 11879 / JCM 9820 / NBRC 100138 / K1).